A 402-amino-acid polypeptide reads, in one-letter code: 26S proteasome regulatory subunit 8 (402 aa).

186-193 contributes to the ATP binding site; it reads GPPGTGKT.

The protein belongs to the AAA ATPase family.

Its subcellular location is the cytoplasm. It localises to the nucleus. Functionally, the 26S proteasome is involved in the ATP-dependent degradation of ubiquitinated proteins. The regulatory (or ATPase) complex confers ATP dependency and substrate specificity to the 26S complex. This chain is 26S proteasome regulatory subunit 8, found in Manduca sexta (Tobacco hawkmoth).